The primary structure comprises 353 residues: COMPASS component SPP1 (353 aa).

Residues 22–72 form a PHD-type zinc finger; that stretch reads DVYCICKRPDYGELMVGCDGCDDWFHFTCLHIPEQFKDLVFSFYCPYCQAG. Residues Cys-25, Cys-27, Cys-39, Cys-42, His-47, Cys-50, Cys-66, and Cys-69 each contribute to the Zn(2+) site. The non coventional C3H-type zinc finger stretch occupies residues 83–124; sequence NGEGSLPKTLWKRKCRISDCYKPCLQDSKYCSEEHGREFVND. Phosphoserine is present on Ser-87. The Zn(2+) site is built by Cys-97, Cys-102, Cys-113, and His-117. Positions 235–244 are enriched in basic and acidic residues; sequence VECGKEDSKG. The tract at residues 235–255 is disordered; that stretch reads VECGKEDSKGTKRKKKKNSSR. The segment covering 245-255 has biased composition (basic residues); it reads TKRKKKKNSSR.

In terms of assembly, component of the Set1C/COMPASS complex which consists of SET1(2), BRE2(2), SPP1(2), SDC1(1), SHG1(1), SWD1(1), SWD2(1), and SWD3(1).

The protein localises to the nucleus. Functionally, component of the Set1C/COMPASS complex that specifically mono-, di- and trimethylates histone H3 to form H3K4me1/2/3, which subsequently plays a role in telomere length maintenance and transcription elongation regulation. COMPASS recognizes ubiquitinated H2B on one face of the nucleosome which stimulates the methylation of H3 on the opposing face. SPP1/CPS40 can recognize methylated histone lysine residue H3K4me3 or unmethylated H3K4. Stimulates the RNA binding activity of SET1. The sequence is that of COMPASS component SPP1 from Saccharomyces cerevisiae (strain ATCC 204508 / S288c) (Baker's yeast).